The primary structure comprises 465 residues: Fumarate hydratase class II (465 aa).

Substrate contacts are provided by residues 99 to 101 (SGT), Arg127, 130 to 133 (HPND), 140 to 142 (STN), and Thr188. The Proton donor/acceptor role is filled by His189. Ser319 is a catalytic residue. Substrate-binding positions include Ser320 and 325 to 327 (KVN).

The protein belongs to the class-II fumarase/aspartase family. Fumarase subfamily. Homotetramer.

The protein localises to the cytoplasm. The enzyme catalyses (S)-malate = fumarate + H2O. It functions in the pathway carbohydrate metabolism; tricarboxylic acid cycle; (S)-malate from fumarate: step 1/1. Involved in the TCA cycle. Catalyzes the stereospecific interconversion of fumarate to L-malate. This Parasynechococcus marenigrum (strain WH8102) protein is Fumarate hydratase class II.